The primary structure comprises 439 residues: Xaa-Pro dipeptidase (439 aa).

Residues Asp-244, Asp-255, His-335, Glu-380, and Glu-419 each coordinate Mn(2+).

Belongs to the peptidase M24B family. Bacterial-type prolidase subfamily. Mn(2+) serves as cofactor.

It catalyses the reaction Xaa-L-Pro dipeptide + H2O = an L-alpha-amino acid + L-proline. Functionally, splits dipeptides with a prolyl residue in the C-terminal position. The chain is Xaa-Pro dipeptidase from Shewanella woodyi (strain ATCC 51908 / MS32).